Reading from the N-terminus, the 260-residue chain is Arginine esterase (260 aa).

A signal peptide spans 1 to 17 (MWFLALCLAMSLGWTGA). A propeptide spans 18 to 24 (EPHFQPR) (activation peptide). Residues 25–257 (IIGGRECLKN…HLMWIKDTMK (233 aa)) form the Peptidase S1 domain. Intrachain disulfides connect C31–C172, C50–C66, C151–C218, C183–C197, and C208–C233. The Charge relay system role is filled by H65. N-linked (GlcNAc...) asparagine glycosylation occurs at N79. The Charge relay system role is filled by D119. The Charge relay system role is filled by S212.

The protein belongs to the peptidase S1 family. Kallikrein subfamily.

It catalyses the reaction Preferential cleavage of Arg-|-Xaa bonds in small molecule substrates. Highly selective action to release kallidin (lysyl-bradykinin) from kininogen involves hydrolysis of Met-|-Xaa or Leu-|-Xaa.. Functionally, this serine protease is found in dog seminal plasma, its exact physiological function is not known. The sequence is that of Arginine esterase from Canis lupus familiaris (Dog).